A 187-amino-acid polypeptide reads, in one-letter code: Photosystem I assembly protein Ycf4 (187 aa).

2 helical membrane-spanning segments follow: residues 25 to 45 (YLWA…GISS) and 69 to 89 (MSFY…TVIW).

It belongs to the Ycf4 family.

It is found in the cellular thylakoid membrane. In terms of biological role, seems to be required for the assembly of the photosystem I complex. The chain is Photosystem I assembly protein Ycf4 from Trichodesmium erythraeum (strain IMS101).